Consider the following 287-residue polypeptide: ATP synthase gamma chain (287 aa).

It belongs to the ATPase gamma chain family. As to quaternary structure, F-type ATPases have 2 components, CF(1) - the catalytic core - and CF(0) - the membrane proton channel. CF(1) has five subunits: alpha(3), beta(3), gamma(1), delta(1), epsilon(1). CF(0) has three main subunits: a, b and c.

It localises to the cell inner membrane. In terms of biological role, produces ATP from ADP in the presence of a proton gradient across the membrane. The gamma chain is believed to be important in regulating ATPase activity and the flow of protons through the CF(0) complex. This is ATP synthase gamma chain from Serratia proteamaculans (strain 568).